The following is a 78-amino-acid chain: Acyl carrier protein (78 aa).

Residues 2-77 (STIEERVKKI…AAIDYVTSHQ (76 aa)) enclose the Carrier domain. Residue S37 is modified to O-(pantetheine 4'-phosphoryl)serine.

This sequence belongs to the acyl carrier protein (ACP) family. 4'-phosphopantetheine is transferred from CoA to a specific serine of apo-ACP by AcpS. This modification is essential for activity because fatty acids are bound in thioester linkage to the sulfhydryl of the prosthetic group.

The protein resides in the cytoplasm. It participates in lipid metabolism; fatty acid biosynthesis. Its function is as follows. Carrier of the growing fatty acid chain in fatty acid biosynthesis. The protein is Acyl carrier protein of Pseudomonas fluorescens (strain SBW25).